Consider the following 448-residue polypeptide: N-succinylarginine dihydrolase (448 aa).

Substrate-binding positions include 19–28 (GGLSYGNVAS), Asn110, and 137–138 (HR). Residue Glu174 is part of the active site. Arg214 lines the substrate pocket. His250 is an active-site residue. Substrate-binding residues include Asp252 and Asn365. Cys371 serves as the catalytic Nucleophile.

It belongs to the succinylarginine dihydrolase family. In terms of assembly, homodimer.

It carries out the reaction N(2)-succinyl-L-arginine + 2 H2O + 2 H(+) = N(2)-succinyl-L-ornithine + 2 NH4(+) + CO2. It functions in the pathway amino-acid degradation; L-arginine degradation via AST pathway; L-glutamate and succinate from L-arginine: step 2/5. Catalyzes the hydrolysis of N(2)-succinylarginine into N(2)-succinylornithine, ammonia and CO(2). The protein is N-succinylarginine dihydrolase of Pseudomonas fluorescens (strain ATCC BAA-477 / NRRL B-23932 / Pf-5).